The sequence spans 141 residues: uncharacterized protein (141 aa).

This is an uncharacterized protein from Saccharomyces cerevisiae (strain ATCC 204508 / S288c) (Baker's yeast).